The chain runs to 379 residues: Guanine nucleotide-binding protein G(s) subunit alpha (379 aa).

The disordered stretch occupies residues 1 to 25 (MGCLGNSKTEDQRNEEKVQRETNKK). G2 carries N-palmitoyl glycine lipidation. C3 carries the S-palmitoyl cysteine lipid modification. The span at 8-25 (KTEDQRNEEKVQRETNKK) shows a compositional bias: basic and acidic residues. Residues 39-379 (ATHRLLLLGA…RMHLRQYELL (341 aa)) form the G-alpha domain. The interval 42 to 55 (RLLLLGAGESGKSS) is G1 motif. GTP contacts are provided by residues 47-55 (GAGESGKSS), 182-189 (LLRCRVLT), 208-212 (DVGGQ), 277-280 (NKQD), and A351. S54 and T189 together coordinate Mg(2+). Positions 181–189 (DLLRCRVLT) are G2 motif. Residues 204–213 (FHMFDVGGQR) are G3 motif. The tract at residues 273-280 (ILFLNKQD) is G4 motif. The segment at 349–354 (TCAVDT) is G5 motif.

It belongs to the G-alpha family. G(s) subfamily. Heterotrimeric G proteins are composed of 3 units; alpha, beta and gamma. The alpha chain contains the guanine nucleotide binding site.

Its subcellular location is the cell membrane. Functionally, guanine nucleotide-binding proteins (G proteins) function as transducers in numerous signaling pathways controlled by G protein-coupled receptors (GPCRs). Signaling involves the activation of adenylyl cyclases, resulting in increased levels of the signaling molecule cAMP. GNAS functions downstream of several GPCRs, including beta-adrenergic receptors. Stimulates the Ras signaling pathway. This chain is Guanine nucleotide-binding protein G(s) subunit alpha (gnas), found in Xenopus laevis (African clawed frog).